The following is a 137-amino-acid chain: UPF0275 protein PM0489 (137 aa).

This sequence belongs to the UPF0275 family.

The protein is UPF0275 protein PM0489 of Pasteurella multocida (strain Pm70).